A 1072-amino-acid chain; its full sequence is DNA-directed RNA polymerase subunit beta (1072 aa).

Belongs to the RNA polymerase beta chain family. In plastids the minimal PEP RNA polymerase catalytic core is composed of four subunits: alpha, beta, beta', and beta''. When a (nuclear-encoded) sigma factor is associated with the core the holoenzyme is formed, which can initiate transcription.

It is found in the plastid. It localises to the chloroplast. The enzyme catalyses RNA(n) + a ribonucleoside 5'-triphosphate = RNA(n+1) + diphosphate. In terms of biological role, DNA-dependent RNA polymerase catalyzes the transcription of DNA into RNA using the four ribonucleoside triphosphates as substrates. The protein is DNA-directed RNA polymerase subunit beta of Eucalyptus globulus subsp. globulus (Tasmanian blue gum).